Reading from the N-terminus, the 442-residue chain is Septin-8 (442 aa).

The span at 1–16 (MAATDLERISNAEPEP) shows a compositional bias: basic and acidic residues. The tract at residues 1-21 (MAATDLERISNAEPEPRSLSL) is disordered. Ala-2 bears the N-acetylalanine mark. Ser-10 bears the Phosphoserine mark. The region spanning 41-307 (QGFSFNILCV…ELYRRCKLEE (267 aa)) is the Septin-type G domain. Residues 51–58 (GETGIGKS) form a G1 motif region. GTP is bound by residues 51–58 (GETGIGKS), Gly-106, 187–195 (KADTISKSE), Gly-241, and Arg-256. Residues 103 to 106 (DAVG) are G3 motif. Residues 186–189 (AKAD) form a G4 motif region. A coiled-coil region spans residues 322 to 407 (LQETYEAKRK…FNCRKAAMEA (86 aa)). Residues 411–420 (QALHATSQQP) are compositionally biased toward polar residues. The interval 411-442 (QALHATSQQPLRKDKDKKKVGGWSSIYSVTIP) is disordered.

This sequence belongs to the TRAFAC class TrmE-Era-EngA-EngB-Septin-like GTPase superfamily. Septin GTPase family. Septins polymerize into heterooligomeric protein complexes that form filaments, and can associate with cellular membranes, actin filaments and microtubules. GTPase activity is required for filament formation. Interacts with SEPTIN7. Interacts with CDK14, SEPTIN4 and SEPTIN5. Interacts with VAMP2; the interaction inhibits interaction of VAMP2 with SYP. Interacts with STX1A. In terms of tissue distribution, expressed in cerebrum, hippocampus and cerebellum (at protein level). Expressed in heart (at protein level).

It localises to the cytoplasm. The protein resides in the cytoskeleton. It is found in the synapse. The protein localises to the cell projection. Its subcellular location is the axon. It localises to the cytoplasmic vesicle. The protein resides in the secretory vesicle. It is found in the synaptic vesicle membrane. The protein localises to the presynapse. Functionally, filament-forming cytoskeletal GTPase. May play a role in platelet secretion. Seems to participate in the process of SNARE complex formation in synaptic vesicles. The protein is Septin-8 of Rattus norvegicus (Rat).